Reading from the N-terminus, the 328-residue chain is Reticulocalbin-3 (328 aa).

The N-terminal stretch at 1–20 (MMWRWSFLLLLLLLRHWALG) is a signal peptide. Residues 24–48 (PDAGPHGQDRVHHGTPLSEAPHDDA) form a disordered region. 6 EF-hand domains span residues 77-112 (QARL…TQQR), 113-148 (HIRD…HYEP), 163-198 (KMLA…EEFP), 200-235 (MRDI…EEPG), 241-276 (WVQT…PSQD), and 277-312 (QPLV…FVGS). D92, D94, W96, E101, D126, D128, D130, R132, and E137 together coordinate Ca(2+). The N-linked (GlcNAc...) asparagine glycan is linked to N140. 20 residues coordinate Ca(2+): D176, D178, D180, M182, E187, D213, N215, D217, Y219, E224, D254, N256, D258, R260, E265, D290, D292, D294, R296, and E301. A Prevents secretion from ER motif is present at residues 325–328 (HDEL).

The protein belongs to the CREC family. As to quaternary structure, interacts with PCSK6 (immature form including the propeptide); probably involved in the maturation and the secretion of PCSK6. Degraded by PCSK6 and other endoproteases including FURIN and PCSK5. In terms of processing, N-glycosylated. Highly expressed in lung and heart. Also detected in liver, spleen, kidney, skeletal muscle, intestine, stomach, and brain.

It is found in the endoplasmic reticulum lumen. Probable molecular chaperone assisting protein biosynthesis and transport in the endoplasmic reticulum. Required for the proper biosynthesis and transport of pulmonary surfactant-associated protein A/SP-A, pulmonary surfactant-associated protein D/SP-D and the lipid transporter ABCA3. By regulating both the proper expression and the degradation through the endoplasmic reticulum-associated protein degradation pathway of these proteins plays a crucial role in pulmonary surfactant homeostasis. Has an anti-fibrotic activity by negatively regulating the secretion of type I and type III collagens. This calcium-binding protein also transiently associates with immature PCSK6 and regulates its secretion. The polypeptide is Reticulocalbin-3 (Mus musculus (Mouse)).